Reading from the N-terminus, the 1353-residue chain is Protein timeless homolog (1353 aa).

Disordered regions lie at residues 798-825, 1150-1291, and 1306-1335; these read VAED…EEEV, KPTR…LEED, and GGSI…DPFT. Residues 802–825 are compositionally biased toward acidic residues; that stretch reads RAEDPDEEDPAEPYDSEQEEEEEV. Basic and acidic residues-rich tracts occupy residues 1150–1160 and 1168–1182; these read KPTRQVERHLE and ERSK…KFDD. 2 stretches are compositionally biased toward acidic residues: residues 1183 to 1206 and 1217 to 1226; these read FLND…EEEE and DSEDEEEHIE. Basic and acidic residues predominate over residues 1227–1239; that stretch reads QEEAQKKLEKVAE. 3 stretches are compositionally biased toward acidic residues: residues 1261–1273, 1282–1291, and 1323–1332; these read DSSD…DSAE, AEDDSDLEED, and EEREDDDDED.

Belongs to the timeless family. Associates with the cohesin complex. Interacts with smc-1, smc-3, scc-1 and scc-3.

It is found in the nucleus. In terms of biological role, plays an important role in chromosome cohesion during both mitosis and meiosis. In prophase of meiosis, it is involved in the formation of the synaptonemal complex (SC) and specifically, in the diplotene and diakinesis phases of prophase, it stabilizes the association of homologous chromosomes during synapsis and sister chromatid cohesion. It regulates cohesin subunits to promote meiotic chromosome cohesion and localizes non-SMC (structural maintenance of chromosome) cohesin subunits to chromatin prior to or during pre-meiotic S phase. Implicated in influencing either the stability or loading of meiotic-specific cohesin subunit, rec8. Controls cell cycle exit and cell fusion to prevent the premature differentiation into adult cells. Specifically, regulates hypodermal seam cell identity. The protein is Protein timeless homolog of Caenorhabditis elegans.